Consider the following 577-residue polypeptide: Multidrug transporter TPO1_2 (577 aa).

A disordered region spans residues 1-63; that stretch reads MSSTSSDRPY…ALSKNSTQTS (63 aa). Residues N44 and N58 are each glycosylated (N-linked (GlcNAc...) asparagine). 12 helical membrane passes run 137–157, 167–187, 204–224, 234–254, 263–283, 293–313, 368–388, 406–426, 446–466, 475–495, 504–526, and 541–561; these read VMLCIILCLNCISITMGSSIF, IYHVIPVVAILGITLYVLGFA, GVLVISSFGFALFNFAVATAK, FFAGFIGAAPLAVVPAAFADM, AICLFSLGVFVGPILAPVIGS, WLEYVIACFASAIFVAILFFF, PLLLIVTIYNSFVYGILYLLL, ELPYISLIIGMAICGAFIWWM, LLPMVVAGIVFPIGILWFCWT, WIVPTIAGAFTGFGLIGIFLP, YLLIAASAVAANTFMRSGFGAAF, and YAGLLLGLLAVAMIPVPLLFL.

This sequence belongs to the major facilitator superfamily. DHA1 family. Polyamines/proton antiporter (TC 2.A.1.2.16) subfamily.

The protein resides in the cell membrane. In terms of biological role, multidrug resistance transporter involved in resistance to azole antifungal drugs such as the imidazoles miconazole, ketoconazole, and tioconazole; as well as the triazoles itraconazole and fluconazole. Also plays a role in the resistance to other antifungal drug families such as the polyene amphotericin B, the pyrimide analog flucytosine, the fungicide mancozeb, and the polyamine spermine. Decreases the intracellular accumulation of clotrimazole by mediating its extrusion from cells. Plays a role in biofilm formation. The sequence is that of Multidrug transporter TPO1_2 from Candida glabrata (strain ATCC 2001 / BCRC 20586 / JCM 3761 / NBRC 0622 / NRRL Y-65 / CBS 138) (Yeast).